The chain runs to 514 residues: GTPase Obg (514 aa).

The Obg domain occupies 2–159 (ATFVDRVTVH…GDILLELKTV (158 aa)). Residues 62 to 88 (RRPHRSSGNGGFGMGDHRSGHTGEDLE) form a disordered region. A compositionally biased stretch (basic and acidic residues) spans 76 to 85 (GDHRSGHTGE). The 177-residue stretch at 160–336 (ADIALVGYPS…LSFALAELVE (177 aa)) folds into the OBG-type G domain. Residues 166–173 (GYPSAGKS), 191–195 (FTTLH), 212–215 (DVPG), 288–291 (NKID), and 317–319 (STV) contribute to the GTP site. The Mg(2+) site is built by Ser173 and Thr193. Residues 356–440 (PKTVDDSGFV…ENGVVFDWEP (85 aa)) form the OCT domain.

Belongs to the TRAFAC class OBG-HflX-like GTPase superfamily. OBG GTPase family. Monomer. Requires Mg(2+) as cofactor.

The protein localises to the cytoplasm. Its function is as follows. An essential GTPase which binds GTP, GDP and possibly (p)ppGpp with moderate affinity, with high nucleotide exchange rates and a fairly low GTP hydrolysis rate. Plays a role in control of the cell cycle, stress response, ribosome biogenesis and in those bacteria that undergo differentiation, in morphogenesis control. In Leifsonia xyli subsp. xyli (strain CTCB07), this protein is GTPase Obg.